The sequence spans 214 residues: MNKISEISIQSQKTENLVKFNANDDLPKSLFEQKEPHFQAIFDSILSERASKRLSTHKVKNRAEVSGTGKKPWKQKSTGKARAGSKRSPIFVGGGRAFGPTTQRNYNLKVNKKVKKLAFISALSQLAQNQQILVNDFSMNKISTKLLVDQLKIFKIDQLRHILIASSDPNLFLSARNLPNVELVKTNSLTVESLIKADLLIISKNEITNLEKRI.

The interval 56–86 is disordered; it reads THKVKNRAEVSGTGKKPWKQKSTGKARAGSK. Over residues 71–85 the composition is skewed to basic residues; that stretch reads KPWKQKSTGKARAGS.

It belongs to the universal ribosomal protein uL4 family. As to quaternary structure, part of the 50S ribosomal subunit.

One of the primary rRNA binding proteins, this protein initially binds near the 5'-end of the 23S rRNA. It is important during the early stages of 50S assembly. It makes multiple contacts with different domains of the 23S rRNA in the assembled 50S subunit and ribosome. Functionally, forms part of the polypeptide exit tunnel. This chain is Large ribosomal subunit protein uL4, found in Mesomycoplasma hyopneumoniae (strain 232) (Mycoplasma hyopneumoniae).